We begin with the raw amino-acid sequence, 272 residues long: Large ribosomal subunit protein uL29m (272 aa).

3 disordered regions span residues 1–29 (MAAA…PLTQ), 56–87 (KHRG…PRNK), and 227–272 (AAAT…TPRL). A compositionally biased stretch (low complexity) spans 17–29 (SSSTPSPLRPLTQ). Composition is skewed to low complexity over residues 227-238 (AAATEGEQQAAE) and 249-259 (PATAATPESAT). Positions 260-272 (IPSSQQQTDTPRL) are enriched in polar residues.

This sequence belongs to the universal ribosomal protein uL29 family. In terms of assembly, component of the mitochondrial large ribosomal subunit. Mature mitochondrial ribosomes consist of a small (37S) and a large (54S) subunit. The 37S subunit contains at least 33 different proteins and 1 molecule of RNA (15S). The 54S subunit contains at least 45 different proteins and 1 molecule of RNA (21S).

It localises to the mitochondrion. In Chaetomium globosum (strain ATCC 6205 / CBS 148.51 / DSM 1962 / NBRC 6347 / NRRL 1970) (Soil fungus), this protein is Large ribosomal subunit protein uL29m (MRPL4).